A 238-amino-acid chain; its full sequence is MADS-box protein 04g005320 (238 aa).

In terms of domain architecture, MADS-box spans 1–61 (MGRGKVELKR…GKLYEFCSTS (61 aa)). Residues 87-177 (SQNNYQEYMK…KTKLEENSVA (91 aa)) enclose the K-box domain.

The protein localises to the nucleus. In terms of biological role, probable MADS-box transcription factor that functions with J2 and EJ2 in meristem maturation. The chain is MADS-box protein 04g005320 from Solanum lycopersicum (Tomato).